The primary structure comprises 212 residues: Pyrrolidone-carboxylate peptidase (212 aa).

Residues Glu78, Cys141, and His165 contribute to the active site.

It belongs to the peptidase C15 family. Homotetramer.

Its subcellular location is the cytoplasm. The enzyme catalyses Release of an N-terminal pyroglutamyl group from a polypeptide, the second amino acid generally not being Pro.. Its function is as follows. Removes 5-oxoproline from various penultimate amino acid residues except L-proline. The chain is Pyrrolidone-carboxylate peptidase from Staphylococcus aureus (strain NCTC 8325 / PS 47).